The sequence spans 440 residues: Aclacinomycin-T 2-deoxy-L-fucose transferase (440 aa).

It catalyses the reaction dTDP-2-deoxy-beta-L-fucose + aclacinomycin T = aclacinomycin S + dTDP + H(+). Its function is as follows. Involved in the biosynthesis of the trisaccharide moiety characteristic of the antitumor drug aclacinomycins. In the first reaction, AknK catalyzes the transfer of 2-deoxy-beta-L-fucose from the activated donor dTDP-2-deoxy-beta-L-fucose to the mono-glycosylated aclacinomycin T (rhodosaminyl aklavinone), forming the di-glycosylated aclacinomycin S (L-2-deoxyfucosyl-L-rhodosaminyl aklavinone). It can also catalyze the addition of an alternate dTDP-L-sugar, dTDP-L-daunosamine, to aclacinomycin T and the addition of 2-deoxy-beta-L-fucose to the mono-glycosylated aglycones (monoglycosylated anthracyclines) such as daunomycin (daunorubicin), adriamycin (doxorubicin) and idarubicin. In vitro, AknK also catalyzes the addition of a second L-2-deoxyfucosyl moiety from dTDP-2-deoxy-beta-L-fucose, albeit with reduced activity, to the natural disaccharide chain of aclacinomycin S to produce L-deoxyfucosyl-L-deoxyfucosyl-L-rhodosaminyl aklavinone (2-deoxy-alpha-D-fucosyl-aclacinomycin S), a variant of the natural aclacinomycin A. This chain is Aclacinomycin-T 2-deoxy-L-fucose transferase, found in Streptomyces galilaeus.